A 368-amino-acid polypeptide reads, in one-letter code: Alanine racemase (368 aa).

Lysine 40 (proton acceptor; specific for D-alanine) is an active-site residue. Position 40 is an N6-(pyridoxal phosphate)lysine (lysine 40). Residue arginine 134 coordinates substrate. Catalysis depends on tyrosine 263, which acts as the Proton acceptor; specific for L-alanine. Methionine 310 contributes to the substrate binding site.

The protein belongs to the alanine racemase family. The cofactor is pyridoxal 5'-phosphate.

It carries out the reaction L-alanine = D-alanine. It functions in the pathway amino-acid biosynthesis; D-alanine biosynthesis; D-alanine from L-alanine: step 1/1. Catalyzes the interconversion of L-alanine and D-alanine. May also act on other amino acids. The protein is Alanine racemase (alr) of Listeria monocytogenes serovar 1/2a (strain ATCC BAA-679 / EGD-e).